The following is a 377-amino-acid chain: Alanine racemase, catabolic (377 aa).

Lys-51 (proton acceptor; specific for D-alanine) is an active-site residue. Lys-51 is modified (N6-(pyridoxal phosphate)lysine). Arg-150 is a substrate binding site. Catalysis depends on Tyr-272, which acts as the Proton acceptor; specific for L-alanine. Met-320 lines the substrate pocket.

It belongs to the alanine racemase family. Pyridoxal 5'-phosphate is required as a cofactor.

It carries out the reaction L-alanine = D-alanine. In terms of biological role, isomerizes L-alanine to D-alanine which is then oxidized to pyruvate by DadA. This chain is Alanine racemase, catabolic (dadX), found in Rhizobium johnstonii (strain DSM 114642 / LMG 32736 / 3841) (Rhizobium leguminosarum bv. viciae).